A 138-amino-acid polypeptide reads, in one-letter code: Putative pre-16S rRNA nuclease (138 aa).

Belongs to the YqgF nuclease family.

The protein resides in the cytoplasm. Could be a nuclease involved in processing of the 5'-end of pre-16S rRNA. This is Putative pre-16S rRNA nuclease from Listeria innocua serovar 6a (strain ATCC BAA-680 / CLIP 11262).